Here is a 290-residue protein sequence, read N- to C-terminus: Inositol monophosphatase 2 (290 aa).

The Mg(2+) site is built by E83, D103, I105, and D106. E83 is a binding site for substrate. Substrate is bound by residues 105–108, 207–209, Q226, and D233; these read IDGT and GSS. D233 is a Mg(2+) binding site.

This sequence belongs to the inositol monophosphatase superfamily. Homodimer. Mg(2+) serves as cofactor.

It localises to the cytoplasm. The enzyme catalyses a myo-inositol phosphate + H2O = myo-inositol + phosphate. It functions in the pathway polyol metabolism; myo-inositol biosynthesis; myo-inositol from D-glucose 6-phosphate: step 2/2. Its function is as follows. Can use myo-inositol monophosphates, scylloinositol 1,4-diphosphate, glucose-1-phosphate, beta-glycerophosphate, and 2'-AMP as substrates. Has been implicated as the pharmacological target for lithium Li(+) action in brain. This chain is Inositol monophosphatase 2 (Impa2), found in Rattus norvegicus (Rat).